Here is a 212-residue protein sequence, read N- to C-terminus: Riboflavin kinase (212 aa).

The unknown stretch occupies residues 1-83 (MTELYCERKT…NLLRYFDIAS (83 aa)). Residues 84 to 212 (IKLVGRVVTG…GDRVELEVYL (129 aa)) are riboflavin kinase. 93–98 (GLGEGA) contacts CDP. 2 residues coordinate Mg(2+): Thr-122 and Asn-124. The FMN site is built by Thr-179 and Glu-187. 192-195 (VRVR) provides a ligand contact to CDP.

This sequence belongs to the archaeal riboflavin kinase family. Mg(2+) is required as a cofactor.

The catalysed reaction is riboflavin + CTP = CDP + FMN + H(+). It functions in the pathway cofactor biosynthesis; FMN biosynthesis; FMN from riboflavin (CTP route): step 1/1. Functionally, catalyzes the CTP-dependent phosphorylation of riboflavin (vitamin B2) to form flavin mononucleotide (FMN). The chain is Riboflavin kinase (ribK) from Pyrobaculum calidifontis (strain DSM 21063 / JCM 11548 / VA1).